A 490-amino-acid chain; its full sequence is Betaine aldehyde dehydrogenase (490 aa).

Asn-93 lines the K(+) pocket. NAD(+) is bound at residue Gly-150–Trp-152. The Charge relay system role is filled by Lys-162. Lys-176–Glu-179 is an NAD(+) binding site. Position 180 (Val-180) interacts with K(+). Gly-230–Thr-233 contacts NAD(+). A K(+)-binding site is contributed by Leu-246. Catalysis depends on Glu-252, which acts as the Proton acceptor. NAD(+) is bound by residues Gly-254, Cys-286, and Glu-387. Cys-286 acts as the Nucleophile in catalysis. Cys-286 carries the cysteine sulfenic acid (-SOH) modification. Residues Lys-457 and Gly-460 each contribute to the K(+) site. Glu-464 functions as the Charge relay system in the catalytic mechanism.

Belongs to the aldehyde dehydrogenase family. As to quaternary structure, dimer of dimers. The cofactor is K(+).

It catalyses the reaction betaine aldehyde + NAD(+) + H2O = glycine betaine + NADH + 2 H(+). The protein operates within amine and polyamine biosynthesis; betaine biosynthesis via choline pathway; betaine from betaine aldehyde: step 1/1. In terms of biological role, involved in the biosynthesis of the osmoprotectant glycine betaine. Catalyzes the irreversible oxidation of betaine aldehyde to the corresponding acid. This is Betaine aldehyde dehydrogenase from Xanthomonas euvesicatoria pv. vesicatoria (strain 85-10) (Xanthomonas campestris pv. vesicatoria).